Consider the following 356-residue polypeptide: Phosphate acyltransferase (356 aa).

Belongs to the PlsX family. As to quaternary structure, homodimer. Probably interacts with PlsY.

The protein resides in the cytoplasm. It catalyses the reaction a fatty acyl-[ACP] + phosphate = an acyl phosphate + holo-[ACP]. The protein operates within lipid metabolism; phospholipid metabolism. Catalyzes the reversible formation of acyl-phosphate (acyl-PO(4)) from acyl-[acyl-carrier-protein] (acyl-ACP). This enzyme utilizes acyl-ACP as fatty acyl donor, but not acyl-CoA. This is Phosphate acyltransferase from Bartonella bacilliformis (strain ATCC 35685 / KC583 / Herrer 020/F12,63).